The sequence spans 158 residues: Cyclic pyranopterin monophosphate synthase (158 aa).

Substrate contacts are provided by residues 75–77 (LCH) and 113–114 (ME). Aspartate 128 is an active-site residue.

Belongs to the MoaC family. As to quaternary structure, homohexamer; trimer of dimers.

It carries out the reaction (8S)-3',8-cyclo-7,8-dihydroguanosine 5'-triphosphate = cyclic pyranopterin phosphate + diphosphate. Its pathway is cofactor biosynthesis; molybdopterin biosynthesis. Catalyzes the conversion of (8S)-3',8-cyclo-7,8-dihydroguanosine 5'-triphosphate to cyclic pyranopterin monophosphate (cPMP). This chain is Cyclic pyranopterin monophosphate synthase, found in Roseiflexus sp. (strain RS-1).